A 485-amino-acid chain; its full sequence is Probable cytosol aminopeptidase (485 aa).

Lysine 251 and aspartate 256 together coordinate Mn(2+). Lysine 263 is an active-site residue. 3 residues coordinate Mn(2+): aspartate 274, aspartate 333, and glutamate 335. Residue arginine 337 is part of the active site.

This sequence belongs to the peptidase M17 family. It depends on Mn(2+) as a cofactor.

Its subcellular location is the cytoplasm. It catalyses the reaction Release of an N-terminal amino acid, Xaa-|-Yaa-, in which Xaa is preferably Leu, but may be other amino acids including Pro although not Arg or Lys, and Yaa may be Pro. Amino acid amides and methyl esters are also readily hydrolyzed, but rates on arylamides are exceedingly low.. The catalysed reaction is Release of an N-terminal amino acid, preferentially leucine, but not glutamic or aspartic acids.. Functionally, presumably involved in the processing and regular turnover of intracellular proteins. Catalyzes the removal of unsubstituted N-terminal amino acids from various peptides. This Brucella melitensis biotype 1 (strain ATCC 23456 / CCUG 17765 / NCTC 10094 / 16M) protein is Probable cytosol aminopeptidase.